Here is a 983-residue protein sequence, read N- to C-terminus: Isoleucine--tRNA ligase (983 aa).

The short motif at P61–H71 is the 'HIGH' region element. E608 serves as a coordination point for L-isoleucyl-5'-AMP. A 'KMSKS' region motif is present at residues K649 to S653. An ATP-binding site is contributed by K652. Zn(2+) contacts are provided by C952, C955, C972, and C975.

It belongs to the class-I aminoacyl-tRNA synthetase family. IleS type 1 subfamily. In terms of assembly, monomer. It depends on Zn(2+) as a cofactor.

It localises to the cytoplasm. The catalysed reaction is tRNA(Ile) + L-isoleucine + ATP = L-isoleucyl-tRNA(Ile) + AMP + diphosphate. In terms of biological role, catalyzes the attachment of isoleucine to tRNA(Ile). As IleRS can inadvertently accommodate and process structurally similar amino acids such as valine, to avoid such errors it has two additional distinct tRNA(Ile)-dependent editing activities. One activity is designated as 'pretransfer' editing and involves the hydrolysis of activated Val-AMP. The other activity is designated 'posttransfer' editing and involves deacylation of mischarged Val-tRNA(Ile). This chain is Isoleucine--tRNA ligase, found in Gloeobacter violaceus (strain ATCC 29082 / PCC 7421).